The sequence spans 801 residues: Mitochondrial intermediate peptidase (801 aa).

A mitochondrion-targeting transit peptide spans 1 to 41 (MKPQLLTPLRRRPWTCRQCLQRLQRLQQQTRRSFETAASPA). The interval 31–54 (RRSFETAASPAPGHTQVDYIPADA) is disordered. His565 is a binding site for Zn(2+). Glu566 is an active-site residue. Zn(2+)-binding residues include His569 and His572.

This sequence belongs to the peptidase M3 family. Zn(2+) is required as a cofactor.

Its subcellular location is the mitochondrion matrix. It catalyses the reaction Release of an N-terminal octapeptide as second stage of processing of some proteins imported into the mitochondrion.. Functionally, cleaves proteins, imported into the mitochondrion, to their mature size. While most mitochondrial precursor proteins are processed to the mature form in one step by mitochondrial processing peptidase (MPP), the sequential cleavage by MIP of an octapeptide after initial processing by MPP is a required step for a subgroup of nuclear-encoded precursor proteins destined for the matrix or the inner membrane. This chain is Mitochondrial intermediate peptidase (oct1), found in Aspergillus clavatus (strain ATCC 1007 / CBS 513.65 / DSM 816 / NCTC 3887 / NRRL 1 / QM 1276 / 107).